We begin with the raw amino-acid sequence, 127 residues long: Small ribosomal subunit protein bS6 (127 aa).

The disordered stretch occupies residues 99 to 127 (PSPMMKEEKSKSMMPGDAAPAAPAETAAA). Residues 110 to 127 (SMMPGDAAPAAPAETAAA) show a composition bias toward low complexity.

Belongs to the bacterial ribosomal protein bS6 family.

Its function is as follows. Binds together with bS18 to 16S ribosomal RNA. The polypeptide is Small ribosomal subunit protein bS6 (Dechloromonas aromatica (strain RCB)).